Consider the following 468-residue polypeptide: 6-phosphogluconate dehydrogenase, decarboxylating (468 aa).

Residues 10–15 (GMAVMG), 33–35 (NRS), 74–76 (VKA), and N102 contribute to the NADP(+) site. Substrate contacts are provided by residues N102 and 128–130 (SGG). K183 acts as the Proton acceptor in catalysis. 186–187 (HN) provides a ligand contact to substrate. The active-site Proton donor is E190. Substrate contacts are provided by Y191, K260, R287, R445, and H451.

The protein belongs to the 6-phosphogluconate dehydrogenase family. In terms of assembly, homodimer.

It catalyses the reaction 6-phospho-D-gluconate + NADP(+) = D-ribulose 5-phosphate + CO2 + NADPH. Its pathway is carbohydrate degradation; pentose phosphate pathway; D-ribulose 5-phosphate from D-glucose 6-phosphate (oxidative stage): step 3/3. Catalyzes the oxidative decarboxylation of 6-phosphogluconate to ribulose 5-phosphate and CO(2), with concomitant reduction of NADP to NADPH. This is 6-phosphogluconate dehydrogenase, decarboxylating (gnd) from Salmonella typhimurium (strain LT2 / SGSC1412 / ATCC 700720).